We begin with the raw amino-acid sequence, 229 residues long: Peptidase E (229 aa).

Catalysis depends on charge relay system residues Ser120, Asp135, and His157.

It belongs to the peptidase S51 family.

The protein localises to the cytoplasm. The catalysed reaction is Dipeptidase E catalyzes the hydrolysis of dipeptides Asp-|-Xaa. It does not act on peptides with N-terminal Glu, Asn or Gln, nor does it cleave isoaspartyl peptides.. Hydrolyzes dipeptides containing N-terminal aspartate residues. May play a role in allowing the cell to use peptide aspartate to spare carbon otherwise required for the synthesis of the aspartate family of amino acids. The sequence is that of Peptidase E from Shigella flexneri serotype 5b (strain 8401).